Consider the following 795-residue polypeptide: TBC1 domain family member 5 (795 aa).

The span at 1–13 (MYHSLSETRHPLQ) shows a compositional bias: basic and acidic residues. Residues 1–49 (MYHSLSETRHPLQPEEQEVGIDPLSSYSNKSGGDSNKNGRRTSSTLDSE) form a disordered region. Over residues 25–49 (SSYSNKSGGDSNKNGRRTSSTLDSE) the composition is skewed to polar residues. Thr42 is modified (phosphothreonine). A phosphoserine mark is found at Ser43 and Ser44. The required for interaction with retromer; involved in interaction with ATG8 family proteins stretch occupies residues 56–64 (RKEWEELFV). Positions 57 to 62 (KEWEEL) match the LIR 1 motif. The region spanning 81 to 359 (LRSSRFRSIC…VVWDALFADG (279 aa)) is the Rab-GAP TBC domain. Ser460 is subject to Phosphoserine. The tract at residues 475 to 564 (PGSAGGPVPG…PPSSATKKDS (90 aa)) is disordered. Residues 484 to 496 (GGNSSSSSSVVIP) show a composition bias toward low complexity. Ser522, Ser539, Ser541, Ser544, Ser554, Ser570, Ser584, and Ser730 each carry phosphoserine. Polar residues predominate over residues 523-542 (MPVQLNKGLSSKNISSSPSV). The span at 554–564 (SPPSSATKKDS) shows a compositional bias: polar residues. A disordered region spans residues 674–795 (HYCSSGQGQG…GFTIVSPLDI (122 aa)). A compositionally biased stretch (polar residues) spans 727 to 748 (ARGSFSGQAQPLRTLRSTSGKS). Positions 765 to 776 (PASASSSNPSSS) are enriched in low complexity. The short motif at 785-789 (SGFTI) is the LIR 2 element. Positions 786–791 (GFTIVS) are required for interaction with ATG8 family proteins. Ser791 carries the post-translational modification Phosphoserine.

Interacts with MAP1LC3A, MAP1LC3B, MAP1LC3C, GABARAP, GABARAPL1, GABARAPL2. Interacts with VPS29 and VPS35; indicative for an association with retromer CSC subcomplex. MAP1LC3A and VPS29 compete for binding to TBC1D5. Interacts with AP2M1; indicative for an association with the AP2 complex. Interacts with ULK1 and ATG13 (phosphorylated); indicative for an association with the activated ULK1-ATG13-FIP200 complex. Interacts with ATG9A; the interactions seems to be restricted to the AP2-clathrin-associated fraction of ATG9A.

The protein resides in the endosome membrane. Its subcellular location is the cytoplasmic vesicle. It localises to the autophagosome. Its function is as follows. May act as a GTPase-activating protein (GAP) for Rab family protein(s). May act as a GAP for RAB7A. Can displace RAB7A and retromer CSC subcomplex from the endosomal membrane to the cytosol; at least retromer displacement seems to require its catalytic activity. Required for retrograde transport of cargo proteins from endosomes to the trans-Golgi network (TGN); the function seems to require its catalytic activity. Involved in regulation of autophagy. May act as a molecular switch between endosomal and autophagosomal transport and is involved in reprogramming vesicle trafficking upon autophagy induction. Involved in the trafficking of ATG9A upon activation of autophagy. May regulate the recruitment of ATG9A-AP2-containing vesicles to autophagic membranes. This is TBC1 domain family member 5 (TBC1D5) from Homo sapiens (Human).